The following is a 156-amino-acid chain: Urease accessory protein UreE (156 aa).

The segment at 133 to 156 is disordered; the sequence is RPESGAYGSGRTMGHDHGPFHVHA. Basic and acidic residues predominate over residues 145-156; that stretch reads MGHDHGPFHVHA.

The protein belongs to the UreE family.

It is found in the cytoplasm. In terms of biological role, involved in urease metallocenter assembly. Binds nickel. Probably functions as a nickel donor during metallocenter assembly. The chain is Urease accessory protein UreE from Rhodobacter capsulatus (Rhodopseudomonas capsulata).